The chain runs to 211 residues: Small ribosomal subunit protein uS4 (211 aa).

Residues 27 to 48 (GRKVLERRGSQPPGQHGASVRR) form a disordered region. Positions 99–162 (RRLDNVVFRL…RKRDYFKDLE (64 aa)) constitute an S4 RNA-binding domain.

This sequence belongs to the universal ribosomal protein uS4 family. As to quaternary structure, part of the 30S ribosomal subunit. Contacts protein S5. The interaction surface between S4 and S5 is involved in control of translational fidelity.

In terms of biological role, one of the primary rRNA binding proteins, it binds directly to 16S rRNA where it nucleates assembly of the body of the 30S subunit. Its function is as follows. With S5 and S12 plays an important role in translational accuracy. The polypeptide is Small ribosomal subunit protein uS4 (Herpetosiphon aurantiacus (strain ATCC 23779 / DSM 785 / 114-95)).